Consider the following 271-residue polypeptide: ELH (271 aa).

Positions 1 to 28 (MKRPNNRPTNTMSLILCLTLSSLCVSSQ) are cleaved as a signal peptide. 2 consecutive propeptides follow at residues 29-95 (SASV…NEKR) and 162-184 (AAGG…RRKR). Positions 162 to 190 (AAGGMEQSEGQNPETESHSRRKRSVLTPS) are disordered. Lys-241 carries the post-translational modification Lysine amide.

The protein belongs to the molluscan ELH family. In terms of tissue distribution, bag cell neurons.

It is found in the secreted. Its function is as follows. ELH acts as a neurotransmitter locally, upon neurons of the abdominal ganglion and as a hormone by diffusing into the circulating hemolymph and modulating the activity of other organs. It specifically causes contraction of smooth muscle in the ovotestis and expulsion of the egg string. Alpha-BCP decreases the activity of a cluster of neurons in the left upper quadrant of the abdominal ganglion. Functionally, beta-BCP specifically excites 2 neurons, L1 and R1, in the abdominal ganglion. This is ELH from Aplysia californica (California sea hare).